Reading from the N-terminus, the 190-residue chain is Ribosome hibernation promotion factor (190 aa).

It belongs to the HPF/YfiA ribosome-associated protein family. Long HPF subfamily. Interacts with 100S ribosomes.

The protein localises to the cytoplasm. In terms of biological role, required for dimerization of active 70S ribosomes into 100S ribosomes in stationary phase; 100S ribosomes are translationally inactive and sometimes present during exponential growth. This Staphylococcus saprophyticus subsp. saprophyticus (strain ATCC 15305 / DSM 20229 / NCIMB 8711 / NCTC 7292 / S-41) protein is Ribosome hibernation promotion factor.